Reading from the N-terminus, the 362-residue chain is MNTPLHLENIKQAPKALLHDHLDGGLRPATVLDIAGQVGYDRLPATDVESLETWFRTASHSGSLERYLEPFSHTVAVMQTPEALHRVAYECVEDLAADSVVYAEVRFAPELHIDEGLSFDEVLASVLAGFADGERACAAEGNAITVRCLVTAMRHAAMSREIAELAIRFRDKGVVGFDIAGAEAGHPPTRHLDAFEYMRSNNARFTIHAGEAFGLPSIHEAIAFCGADRLGHGVRIVDDIDVDPGGGIRLGPLASILRDKRIPLELCPSSNLQTGAVASITEHPFDLLAWARFRVTVNTDNRLMSDTSMSLEMHRLVEAFGYGWGDLERFTINAMKSAFIPFDQRLAIIDEVIKPRFAVLVG.

2 residues coordinate Zn(2+): His-19 and His-21. Residues His-21, Asp-23, and Gly-181 each contribute to the substrate site. Position 208 (His-208) interacts with Zn(2+). Residue Glu-211 is the Proton donor of the active site. Asp-300 contributes to the Zn(2+) binding site.

It belongs to the metallo-dependent hydrolases superfamily. Adenosine and AMP deaminases family. Adenosine deaminase subfamily. It depends on Zn(2+) as a cofactor.

It catalyses the reaction adenosine + H2O + H(+) = inosine + NH4(+). It carries out the reaction 2'-deoxyadenosine + H2O + H(+) = 2'-deoxyinosine + NH4(+). Functionally, catalyzes the hydrolytic deamination of adenosine and 2-deoxyadenosine. The sequence is that of Adenosine deaminase from Mycobacterium leprae (strain TN).